A 115-amino-acid chain; its full sequence is NADH-ubiquinone oxidoreductase chain 3 (115 aa).

3 consecutive transmembrane segments (helical) span residues 3–23 (LALA…ITFW), 55–75 (FFLV…LLPL), and 86–106 (LTIA…AYEW).

The protein belongs to the complex I subunit 3 family. Core subunit of respiratory chain NADH dehydrogenase (Complex I) which is composed of 45 different subunits. Interacts with TMEM186. Interacts with TMEM242.

It is found in the mitochondrion inner membrane. The enzyme catalyses a ubiquinone + NADH + 5 H(+)(in) = a ubiquinol + NAD(+) + 4 H(+)(out). In terms of biological role, core subunit of the mitochondrial membrane respiratory chain NADH dehydrogenase (Complex I) which catalyzes electron transfer from NADH through the respiratory chain, using ubiquinone as an electron acceptor. Essential for the catalytic activity of complex I. The protein is NADH-ubiquinone oxidoreductase chain 3 of Hylobates lar (Lar gibbon).